We begin with the raw amino-acid sequence, 432 residues long: Glutamate-1-semialdehyde 2,1-aminomutase (432 aa).

Position 272 is an N6-(pyridoxal phosphate)lysine (K272).

The protein belongs to the class-III pyridoxal-phosphate-dependent aminotransferase family. HemL subfamily. Homodimer. It depends on pyridoxal 5'-phosphate as a cofactor.

It is found in the cytoplasm. It catalyses the reaction (S)-4-amino-5-oxopentanoate = 5-aminolevulinate. Its pathway is porphyrin-containing compound metabolism; protoporphyrin-IX biosynthesis; 5-aminolevulinate from L-glutamyl-tRNA(Glu): step 2/2. The protein operates within porphyrin-containing compound metabolism; chlorophyll biosynthesis. In Acaryochloris marina (strain MBIC 11017), this protein is Glutamate-1-semialdehyde 2,1-aminomutase.